The primary structure comprises 456 residues: Gamma-glutamyl phosphate reductase (456 aa).

Belongs to the gamma-glutamyl phosphate reductase family.

It is found in the cytoplasm. It carries out the reaction L-glutamate 5-semialdehyde + phosphate + NADP(+) = L-glutamyl 5-phosphate + NADPH + H(+). The protein operates within amino-acid biosynthesis; L-proline biosynthesis; L-glutamate 5-semialdehyde from L-glutamate: step 2/2. Functionally, catalyzes the NADPH-dependent reduction of L-glutamate 5-phosphate into L-glutamate 5-semialdehyde and phosphate. The product spontaneously undergoes cyclization to form 1-pyrroline-5-carboxylate. The protein is Gamma-glutamyl phosphate reductase of Haloquadratum walsbyi (strain DSM 16790 / HBSQ001).